The sequence spans 89 residues: Small ribosomal subunit protein uS14A (89 aa).

The protein belongs to the universal ribosomal protein uS14 family. As to quaternary structure, part of the 30S ribosomal subunit. Contacts proteins S3 and S10.

Its function is as follows. Binds 16S rRNA, required for the assembly of 30S particles and may also be responsible for determining the conformation of the 16S rRNA at the A site. The sequence is that of Small ribosomal subunit protein uS14A from Limosilactobacillus reuteri (strain DSM 20016) (Lactobacillus reuteri).